Reading from the N-terminus, the 268-residue chain is Shikimate dehydrogenase (NADP(+)) (268 aa).

Residues 13–15 (SLS) and Thr60 each bind shikimate. Lys64 acts as the Proton acceptor in catalysis. Asp76 provides a ligand contact to NADP(+). Shikimate contacts are provided by Asn85 and Asp100. NADP(+)-binding positions include 124-128 (GAGGA), 148-153 (NRTMSR), and Ile209. Position 211 (Tyr211) interacts with shikimate. An NADP(+)-binding site is contributed by Gly232.

Belongs to the shikimate dehydrogenase family. As to quaternary structure, homodimer.

It carries out the reaction shikimate + NADP(+) = 3-dehydroshikimate + NADPH + H(+). It functions in the pathway metabolic intermediate biosynthesis; chorismate biosynthesis; chorismate from D-erythrose 4-phosphate and phosphoenolpyruvate: step 4/7. Functionally, involved in the biosynthesis of the chorismate, which leads to the biosynthesis of aromatic amino acids. Catalyzes the reversible NADPH linked reduction of 3-dehydroshikimate (DHSA) to yield shikimate (SA). This chain is Shikimate dehydrogenase (NADP(+)), found in Staphylococcus haemolyticus (strain JCSC1435).